Consider the following 560-residue polypeptide: NAD-dependent malic enzyme (560 aa).

Residue tyrosine 100 is the Proton donor of the active site. Arginine 153 contacts NAD(+). Lysine 171 (proton acceptor) is an active-site residue. A divalent metal cation contacts are provided by glutamate 242, aspartate 243, and aspartate 266. NAD(+) is bound by residues aspartate 266 and asparagine 413.

It belongs to the malic enzymes family. As to quaternary structure, homotetramer. Requires Mg(2+) as cofactor. Mn(2+) serves as cofactor.

It carries out the reaction (S)-malate + NAD(+) = pyruvate + CO2 + NADH. It catalyses the reaction oxaloacetate + H(+) = pyruvate + CO2. This chain is NAD-dependent malic enzyme, found in Psychromonas ingrahamii (strain DSM 17664 / CCUG 51855 / 37).